The chain runs to 338 residues: Taste receptor type 2 member 39 (338 aa).

The Extracellular segment spans residues methionine 1–serine 30. A helical membrane pass occupies residues proline 31–alanine 51. At asparagine 52–arginine 74 the chain is on the cytoplasmic side. A helical transmembrane segment spans residues isoleucine 75–threonine 95. The Extracellular portion of the chain corresponds to isoleucine 96–serine 116. Residues phenylalanine 117 to valine 137 traverse the membrane as a helical segment. Topologically, residues lysine 138–glycine 156 are cytoplasmic. The chain crosses the membrane as a helical span at residues leucine 157–isoleucine 177. Residues asparagine 178–asparagine 205 lie on the Extracellular side of the membrane. Residues asparagine 185 and asparagine 194 are each glycosylated (N-linked (GlcNAc...) asparagine). The helical transmembrane segment at valine 206–leucine 226 threads the bilayer. The Cytoplasmic segment spans residues threonine 227–lysine 262. The chain crosses the membrane as a helical span at residues alanine 263–serine 283. The Extracellular portion of the chain corresponds to asparagine 284–leucine 291. A helical transmembrane segment spans residues tryptophan 292–isoleucine 312. Topologically, residues glutamine 313–leucine 338 are cytoplasmic.

Belongs to the G-protein coupled receptor T2R family. Expressed in subsets of taste receptor cells of the tongue and exclusively in gustducin-positive cells.

It localises to the membrane. In terms of biological role, receptor that may play a role in the perception of bitterness and is gustducin-linked. May play a role in sensing the chemical composition of the gastrointestinal content. The activity of this receptor may stimulate alpha gustducin, mediate PLC-beta-2 activation and lead to the gating of TRPM5. In Homo sapiens (Human), this protein is Taste receptor type 2 member 39 (TAS2R39).